A 2176-amino-acid polypeptide reads, in one-letter code: Methyl-CpG-binding domain-containing protein 9 (2176 aa).

Over residues 1 to 13 (MEPTDSTNEQLGD) the composition is skewed to polar residues. Disordered stretches follow at residues 1-20 (MEPTDSTNEQLGDTKTAAVK) and 28-85 (GIDL…RDAS). Residues 83 to 133 (DASCGACGRPESIELVVVCDACERGFHMSCVNDGVEAAPSADWMCSDCRTG) form a PHD-type 1 zinc finger. The segment at 86 to 131 (CGACGRPESIELVVVCDACERGFHMSCVNDGVEAAPSADWMCSDCR) adopts an RING-type 1; degenerate zinc-finger fold. Residues 258 to 327 (RHFISERHGV…MDAEIRNENS (70 aa)) form the MBD domain. Positions 403-456 (GCPMQFEDFFVLSLGRIDIRQSYHNVNVIYPIGYKSCWHDKITGSLFTCEVSDG) constitute an FYR N-terminal domain. Positions 491–511 (EQNSDKLSNRRDSTQERDDDA) form a coiled coil. The FYR C-terminal domain maps to 550–698 (SSRVDFDKNL…ESCTNYRTLK (149 aa)). 3 consecutive short sequence motifs (nuclear localization signal) follow at residues 914–921 (SRRGRKKD), 1124–1131 (KKRTYISV), and 1256–1263 (YRKLECLS). One copy of the Pumilio repeat lies at 1098 to 1137 (PTKKAVLSLLADIRGGDLVQRSIKGTKKRTYISVSDVIMK). The region spanning 1130-1245 (SVSDVIMKKC…EKFKSLYEAE (116 aa)) is the Bromo domain. The stretch at 1251–1273 (QKLKDYRKLECLSAEMKKEIKDI) forms a coiled coil. A PHD-type 2 zinc finger spans residues 1287–1337 (EGVCKVCGVDKDDDSVLLCDTCDAEYHTYCLNPPLIRIPDGNWYCPSCVIA). The RING-type 2; degenerate zinc finger occupies 1290–1335 (CKVCGVDKDDDSVLLCDTCDAEYHTYCLNPPLIRIPDGNWYCPSCV). Residues 1337-1344 (AKRMAQEA) carry the Nuclear localization signal motif. Residues 1410-1437 (QHLEQCAEAIIEMQQKLRSLSSEWKNAK) adopt a coiled-coil conformation. Disordered regions lie at residues 1472 to 1553 (GCDP…NLPE) and 1565 to 1595 (GRNHETHSPNSNAVELPTAHDASSQASQELQ). 3 stretches are compositionally biased toward polar residues: residues 1492-1513 (SSTAYLNKNQGKSPLETDTQPG), 1523-1532 (KISSPETISS), and 1585-1595 (DASSQASQELQ). Residues 1588-1628 (SQASQELQACQQDLSATSNEIQNLQQSIRSIESQLLKQSIR) adopt a coiled-coil conformation. Positions 1761–1768 (EKRYGPCI) match the Nuclear localization signal motif. The disordered stretch occupies residues 2136–2176 (IDETKPIISLPDQKSQPVSDSQERSSRVRRSGKKRKEPEGS).

In terms of assembly, interacts with histone H4. Expressed in leaves, buds, flowers and stems.

It localises to the nucleus. The catalysed reaction is L-lysyl-[protein] + acetyl-CoA = N(6)-acetyl-L-lysyl-[protein] + CoA + H(+). In terms of biological role, probable transcriptional regulator that acts as a histone acetyltransferase. Mediates the acetylation of histone H3 and H4 of target loci (e.g. FLC). Involved in an auxin-independent regulation of shoot branching and flowering time. This Arabidopsis thaliana (Mouse-ear cress) protein is Methyl-CpG-binding domain-containing protein 9 (MBD9).